A 283-amino-acid polypeptide reads, in one-letter code: Shikimate kinase (283 aa).

Residue 86–96 (PIKSGLSSSSA) coordinates ATP.

It belongs to the GHMP kinase family. Archaeal shikimate kinase subfamily.

Its subcellular location is the cytoplasm. The enzyme catalyses shikimate + ATP = 3-phosphoshikimate + ADP + H(+). Its pathway is metabolic intermediate biosynthesis; chorismate biosynthesis; chorismate from D-erythrose 4-phosphate and phosphoenolpyruvate: step 5/7. This is Shikimate kinase from Methanococcus maripaludis (strain C5 / ATCC BAA-1333).